The chain runs to 748 residues: ATP-dependent rRNA helicase SPB4 (748 aa).

The short motif at 15-43 (WAKLNPPLSPWILDVINSMGFKNMTPVQA) is the Q motif element. The Helicase ATP-binding domain occupies 46–260 (IPRAVKNQDC…GLGLRNPVRI (215 aa)). 59 to 66 (AVTGSGKT) serves as a coordination point for ATP. The interval 119 to 156 (ESEEETGDVEAHAPPFASSSRSPSPQTPDKPLFPLPML) is disordered. The segment covering 132 to 142 (PPFASSSRSPS) has biased composition (low complexity). Pro residues predominate over residues 143–152 (PQTPDKPLFP). A DEAD box motif is present at residues 207 to 210 (DEAD). A Helicase C-terminal domain is found at 295–460 (KTLQLIRLLL…KAQRSILDFL (166 aa)). A disordered region spans residues 614–748 (AQRADNQSSN…IGGGMFDDLE (135 aa)). Basic and acidic residues-rich tracts occupy residues 626-669 (ARAE…KYEW) and 708-730 (EIGK…KESS). The span at 732–748 (GGAGGGGIGGGMFDDLE) shows a compositional bias: gly residues.

It belongs to the DEAD box helicase family. DDX55/SPB4 subfamily. In terms of assembly, component of pre-60S ribosomal complexes.

The protein resides in the nucleus. Its subcellular location is the nucleolus. The catalysed reaction is ATP + H2O = ADP + phosphate + H(+). Its function is as follows. ATP-binding RNA helicase involved in the biogenesis of 60S ribosomal subunits. Binds 90S pre-ribosomal particles and dissociates from pre-60S ribosomal particles after processing of 27SB pre-rRNA. Required for the normal formation of 18S rRNA through the processing of pre-rRNAs at sites A0, A1 and A2, and the normal formation of 25S and 5.8S rRNAs through the processing of pre-rRNAs at sites C1 and C2. The polypeptide is ATP-dependent rRNA helicase SPB4 (Cryptococcus neoformans var. neoformans serotype D (strain B-3501A) (Filobasidiella neoformans)).